Reading from the N-terminus, the 239-residue chain is Pyridoxine 5'-phosphate synthase (239 aa).

Residue Asn-7 participates in 3-amino-2-oxopropyl phosphate binding. Residue 9 to 10 participates in 1-deoxy-D-xylulose 5-phosphate binding; the sequence is DH. Position 18 (Arg-18) interacts with 3-amino-2-oxopropyl phosphate. The Proton acceptor role is filled by His-43. 2 residues coordinate 1-deoxy-D-xylulose 5-phosphate: Arg-45 and His-50. The Proton acceptor role is filled by Glu-70. Position 100 (Thr-100) interacts with 1-deoxy-D-xylulose 5-phosphate. His-191 serves as the catalytic Proton donor. Residues Gly-192 and 213–214 each bind 3-amino-2-oxopropyl phosphate; that span reads GH.

Belongs to the PNP synthase family. As to quaternary structure, homooctamer; tetramer of dimers.

The protein resides in the cytoplasm. It carries out the reaction 3-amino-2-oxopropyl phosphate + 1-deoxy-D-xylulose 5-phosphate = pyridoxine 5'-phosphate + phosphate + 2 H2O + H(+). It functions in the pathway cofactor biosynthesis; pyridoxine 5'-phosphate biosynthesis; pyridoxine 5'-phosphate from D-erythrose 4-phosphate: step 5/5. Functionally, catalyzes the complicated ring closure reaction between the two acyclic compounds 1-deoxy-D-xylulose-5-phosphate (DXP) and 3-amino-2-oxopropyl phosphate (1-amino-acetone-3-phosphate or AAP) to form pyridoxine 5'-phosphate (PNP) and inorganic phosphate. The sequence is that of Pyridoxine 5'-phosphate synthase from Pelobacter propionicus (strain DSM 2379 / NBRC 103807 / OttBd1).